Here is a 480-residue protein sequence, read N- to C-terminus: Acetyl-coenzyme A carboxylase carboxyl transferase subunit beta, chloroplastic (480 aa).

Positions 212–480 (LWVQCENCYG…FPLNQINKYK (269 aa)) constitute a CoA carboxyltransferase N-terminal domain. Residues Cys216, Cys219, Cys235, and Cys238 each coordinate Zn(2+). A C4-type zinc finger spans residues 216–238 (CENCYGLNYQKFFRSKMNICERC).

The protein belongs to the AccD/PCCB family. In terms of assembly, acetyl-CoA carboxylase is a heterohexamer composed of biotin carboxyl carrier protein, biotin carboxylase and 2 subunits each of ACCase subunit alpha and ACCase plastid-coded subunit beta (accD). The cofactor is Zn(2+).

Its subcellular location is the plastid. The protein resides in the chloroplast stroma. The enzyme catalyses N(6)-carboxybiotinyl-L-lysyl-[protein] + acetyl-CoA = N(6)-biotinyl-L-lysyl-[protein] + malonyl-CoA. The protein operates within lipid metabolism; malonyl-CoA biosynthesis; malonyl-CoA from acetyl-CoA: step 1/1. Functionally, component of the acetyl coenzyme A carboxylase (ACC) complex. Biotin carboxylase (BC) catalyzes the carboxylation of biotin on its carrier protein (BCCP) and then the CO(2) group is transferred by the transcarboxylase to acetyl-CoA to form malonyl-CoA. This Illicium oligandrum (Star anise) protein is Acetyl-coenzyme A carboxylase carboxyl transferase subunit beta, chloroplastic.